We begin with the raw amino-acid sequence, 402 residues long: MADAAAPDAASVRNFTINFGPQHPAAHGVLRLVLELDGEVVERVDPHIGLLHRGTEKLIEQKTYLQAIPYFDRLDYVAPMNQEHAFCLAVEKLLGIAVPRRAQLIRVLYAEIGRILSHLLNVTTQAMDVGALTPPLWGFEEREKLMMFYERASGSRMHAAYFRVGGVHQDLPPKLVDDIDAWCDAFPAVVNDLDRLLSDNRIFKQRNVDIGVVTLDQAWSWGFSGVMVRGSGAAWDLRKSQPYECYAELDFEVPIGKNGDCYDRYHIRMEEMRQSVRIMKQCIAKLRAPDGQGPVVVDDHKIFPPRRGEMKRSMEALIHHFKLYTEGFHVPAGEVYVAVEAPKGEFGVYLVSDGSNKPYKCKIRAPGFAHLQAMDFLSRGHLLADVSAILGSLDIVFGEVDR.

It belongs to the complex I 49 kDa subunit family. In terms of assembly, NDH-1 is composed of 14 different subunits. Subunits NuoB, C, D, E, F, and G constitute the peripheral sector of the complex.

Its subcellular location is the cell inner membrane. It catalyses the reaction a quinone + NADH + 5 H(+)(in) = a quinol + NAD(+) + 4 H(+)(out). Functionally, NDH-1 shuttles electrons from NADH, via FMN and iron-sulfur (Fe-S) centers, to quinones in the respiratory chain. The immediate electron acceptor for the enzyme in this species is believed to be ubiquinone. Couples the redox reaction to proton translocation (for every two electrons transferred, four hydrogen ions are translocated across the cytoplasmic membrane), and thus conserves the redox energy in a proton gradient. In Rhodopseudomonas palustris (strain TIE-1), this protein is NADH-quinone oxidoreductase subunit D.